Here is a 317-residue protein sequence, read N- to C-terminus: Acetyl-coenzyme A carboxylase carboxyl transferase subunit alpha (317 aa).

The region spanning 33-294 (NLDDEITRLQ…KKRLLADLAD (262 aa)) is the CoA carboxyltransferase C-terminal domain.

Belongs to the AccA family. As to quaternary structure, acetyl-CoA carboxylase is a heterohexamer composed of biotin carboxyl carrier protein (AccB), biotin carboxylase (AccC) and two subunits each of ACCase subunit alpha (AccA) and ACCase subunit beta (AccD).

The protein resides in the cytoplasm. The catalysed reaction is N(6)-carboxybiotinyl-L-lysyl-[protein] + acetyl-CoA = N(6)-biotinyl-L-lysyl-[protein] + malonyl-CoA. Its pathway is lipid metabolism; malonyl-CoA biosynthesis; malonyl-CoA from acetyl-CoA: step 1/1. Component of the acetyl coenzyme A carboxylase (ACC) complex. First, biotin carboxylase catalyzes the carboxylation of biotin on its carrier protein (BCCP) and then the CO(2) group is transferred by the carboxyltransferase to acetyl-CoA to form malonyl-CoA. This chain is Acetyl-coenzyme A carboxylase carboxyl transferase subunit alpha, found in Histophilus somni (strain 2336) (Haemophilus somnus).